We begin with the raw amino-acid sequence, 554 residues long: Cytochrome c oxidase subunit 1-alpha (554 aa).

The helical transmembrane segment at 26-56 threads the bilayer; that stretch reads KDIGVLYLFTAGLAGLISVTLTVYMRMELQH. Cys-63 and Cys-77 are joined by a disulfide. Helical transmembrane passes span 81-118, 127-148, 175-203, 215-248, 260-295, and 301-319; these read AHLW…LHIG, LNNL…SLLS, AMDL…TFLN, PLFA…DRNF, DPVL…STFA, and GYLP…GFIV. Residue His-91 coordinates Fe(II)-heme a. 2 residues coordinate Cu cation: His-273 and Tyr-277. The 1'-histidyl-3'-tyrosine (His-Tyr) cross-link spans 273–277; that stretch reads HPEVY. The Cu cation site is built by His-322 and His-323. The next 5 helical transmembrane spans lie at 331 to 359, 367 to 390, 399 to 425, 436 to 463, and 478 to 508; these read LTQQ…IATM, KTPM…VIAQ, DTYY…GTYY, PEWA…FLGR, and SYWN…TLFA. Residue His-406 coordinates heme a3. His-408 contacts Fe(II)-heme a.

This sequence belongs to the heme-copper respiratory oxidase family. The cofactor is Cu(2+). It depends on heme as a cofactor.

It is found in the cell inner membrane. The enzyme catalyses 4 Fe(II)-[cytochrome c] + O2 + 8 H(+)(in) = 4 Fe(III)-[cytochrome c] + 2 H2O + 4 H(+)(out). Its pathway is energy metabolism; oxidative phosphorylation. In terms of biological role, subunit I and II form the functional core of the enzyme complex. Electrons originating in cytochrome c are transferred via heme a and Cu(A) to the binuclear center formed by heme a3 and Cu(B). This cytochrome c oxidase shows proton pump activity across the membrane in addition to the electron transfer. This is Cytochrome c oxidase subunit 1-alpha (ctaDI) from Paracoccus denitrificans.